A 298-amino-acid polypeptide reads, in one-letter code: Probable 2-(5''-triphosphoribosyl)-3'-dephosphocoenzyme-A synthase 2 (298 aa).

It belongs to the CitG/MdcB family.

The enzyme catalyses 3'-dephospho-CoA + ATP = 2'-(5''-triphospho-alpha-D-ribosyl)-3'-dephospho-CoA + adenine. This is Probable 2-(5''-triphosphoribosyl)-3'-dephosphocoenzyme-A synthase 2 from Salmonella choleraesuis (strain SC-B67).